A 362-amino-acid chain; its full sequence is Sulfate/thiosulfate import ATP-binding protein CysA (362 aa).

The region spanning 3-237 is the ABC transporter domain; the sequence is IEIHDLSKQF…PANPFVYEFL (235 aa). 35–42 lines the ATP pocket; the sequence is GPSGSGKT.

The protein belongs to the ABC transporter superfamily. Sulfate/tungstate importer (TC 3.A.1.6) family. As to quaternary structure, the complex is composed of two ATP-binding proteins (CysA), two transmembrane proteins (CysT and CysW) and a solute-binding protein (CysP).

It localises to the cell inner membrane. It catalyses the reaction sulfate(out) + ATP + H2O = sulfate(in) + ADP + phosphate + H(+). It carries out the reaction thiosulfate(out) + ATP + H2O = thiosulfate(in) + ADP + phosphate + H(+). Functionally, part of the ABC transporter complex CysAWTP involved in sulfate/thiosulfate import. Responsible for energy coupling to the transport system. The chain is Sulfate/thiosulfate import ATP-binding protein CysA from Nitrosomonas europaea (strain ATCC 19718 / CIP 103999 / KCTC 2705 / NBRC 14298).